Consider the following 186-residue polypeptide: Tumor necrosis factor alpha-induced protein 8-like protein 1 (186 aa).

A coiled-coil region spans residues Glu37–Leu70.

Belongs to the TNFAIP8 family.

The protein resides in the cytoplasm. The sequence is that of Tumor necrosis factor alpha-induced protein 8-like protein 1 (tnfaip8l1) from Danio rerio (Zebrafish).